We begin with the raw amino-acid sequence, 219 residues long: Inner membrane protein YghB (219 aa).

At 1-17 (MAVIQDIIAALWQHDFA) the chain is on the cytoplasmic side. The chain crosses the membrane as a helical span at residues 18 to 38 (ALANPHVVSVVYFVMFATLFL). The Periplasmic portion of the chain corresponds to 39–67 (ENGLLPASFLPGDSLLLLAGALIAQDVMH). Residues 68-88 (FLPTIGILTAAASLGCWLSYI) form a helical membrane-spanning segment. At 89-160 (QGRWLGNTRT…RRFQFFNWLS (72 aa)) the chain is on the cytoplasmic side. Residues 161-181 (GLLWVTVVTSFGYALSMIPFV) traverse the membrane as a helical segment. Residues 182 to 191 (KRHEDQVMTF) lie on the Periplasmic side of the membrane. A helical membrane pass occupies residues 192–212 (LMILPVALLVAGLLGTLVVVI). The Cytoplasmic portion of the chain corresponds to 213–219 (KKKYCNA).

It belongs to the DedA family.

It localises to the cell inner membrane. The protein is Inner membrane protein YghB (yghB) of Salmonella typhimurium (strain LT2 / SGSC1412 / ATCC 700720).